A 311-amino-acid polypeptide reads, in one-letter code: Glycerol-3-phosphate dehydrogenase [NAD(P)+] (311 aa).

4 residues coordinate NADPH: Trp11, Arg30, Arg31, and Lys95. Residues Lys95, Gly123, and Ser125 each coordinate sn-glycerol 3-phosphate. Ala127 is an NADPH binding site. Positions 177, 230, 240, 241, and 242 each coordinate sn-glycerol 3-phosphate. The Proton acceptor role is filled by Lys177. Arg241 serves as a coordination point for NADPH. Residues Val265 and Glu267 each coordinate NADPH.

It belongs to the NAD-dependent glycerol-3-phosphate dehydrogenase family.

Its subcellular location is the cytoplasm. It catalyses the reaction sn-glycerol 3-phosphate + NAD(+) = dihydroxyacetone phosphate + NADH + H(+). The enzyme catalyses sn-glycerol 3-phosphate + NADP(+) = dihydroxyacetone phosphate + NADPH + H(+). It participates in membrane lipid metabolism; glycerophospholipid metabolism. Functionally, catalyzes the reduction of the glycolytic intermediate dihydroxyacetone phosphate (DHAP) to sn-glycerol 3-phosphate (G3P), the key precursor for phospholipid synthesis. In Bartonella bacilliformis (strain ATCC 35685 / KC583 / Herrer 020/F12,63), this protein is Glycerol-3-phosphate dehydrogenase [NAD(P)+].